Reading from the N-terminus, the 459-residue chain is Ribulose bisphosphate carboxylase large chain (459 aa).

Lys-4 bears the N6,N6,N6-trimethyllysine mark. Substrate contacts are provided by Asn-113 and Thr-163. The active-site Proton acceptor is the Lys-165. Residue Lys-167 participates in substrate binding. Mg(2+) is bound by residues Lys-191, Asp-193, and Glu-194. Lys-191 is subject to N6-carboxylysine. His-284 (proton acceptor) is an active-site residue. Positions 285, 317, and 369 each coordinate substrate.

The protein belongs to the RuBisCO large chain family. Type I subfamily. As to quaternary structure, heterohexadecamer of 8 large chains and 8 small chains; disulfide-linked. The disulfide link is formed within the large subunit homodimers. Mg(2+) is required as a cofactor. Post-translationally, the disulfide bond which can form in the large chain dimeric partners within the hexadecamer appears to be associated with oxidative stress and protein turnover.

The protein resides in the plastid. It localises to the chloroplast. It carries out the reaction 2 (2R)-3-phosphoglycerate + 2 H(+) = D-ribulose 1,5-bisphosphate + CO2 + H2O. The catalysed reaction is D-ribulose 1,5-bisphosphate + O2 = 2-phosphoglycolate + (2R)-3-phosphoglycerate + 2 H(+). RuBisCO catalyzes two reactions: the carboxylation of D-ribulose 1,5-bisphosphate, the primary event in carbon dioxide fixation, as well as the oxidative fragmentation of the pentose substrate in the photorespiration process. Both reactions occur simultaneously and in competition at the same active site. The protein is Ribulose bisphosphate carboxylase large chain of Nyssa ogeche (Ogeechee tupelo).